The following is a 272-amino-acid chain: Streptomycin 3''-kinase (272 aa).

Residue Asp190 is the Proton acceptor of the active site.

It belongs to the aminoglycoside phosphotransferase family.

It catalyses the reaction streptomycin + ATP = streptomycin 3''-phosphate + ADP + H(+). Its function is as follows. The aminoglycoside phosphotransferases achieve inactivation of their antibiotic substrates by phosphorylation. This is Streptomycin 3''-kinase (aphE) from Streptomyces griseus.